Reading from the N-terminus, the 288-residue chain is Inorganic pyrophosphatase (288 aa).

Residue R80 coordinates diphosphate. The Mg(2+) site is built by D117, D122, and D154. The segment at 252–271 (TPSYSDAAAQEIPSASPAPA) is disordered. Over residues 258–271 (AAAQEIPSASPAPA) the composition is skewed to low complexity.

Belongs to the PPase family. The cofactor is Mg(2+).

Its subcellular location is the cytoplasm. It carries out the reaction diphosphate + H2O = 2 phosphate + H(+). In Candida albicans (strain SC5314 / ATCC MYA-2876) (Yeast), this protein is Inorganic pyrophosphatase (IPP1).